The following is a 133-amino-acid chain: Cytochrome b5 (133 aa).

One can recognise a Cytochrome b5 heme-binding domain in the interval 4-86; the sequence is EKEYILDEIS…LKNYLVGNFK (83 aa). The heme site is built by histidine 45 and histidine 69. The chain crosses the membrane as a helical span at residues 108–128; it reads SGTGIMLIVLMALFAIAYGYY.

Belongs to the cytochrome b5 family. As to quaternary structure, interacts with alternative squalene epoxidase PHATRDRAFT_45494.

It is found in the endoplasmic reticulum membrane. In terms of biological role, hemoprotein that functions as an electron carrier for membrane bound monooxygenases involved in sterol biosynthesis. This is Cytochrome b5 from Phaeodactylum tricornutum (strain CCAP 1055/1).